The primary structure comprises 213 residues: MTDKPHQCVIIGIAGASASGKSLIASTLYRELRDQVGDEHIGVIPEDSYYKDQTHLTMEERVKTNYDHPSAMDHNLLFQHLQMLKSGKAIELPLYSYTEHTRKKETIHLEPKKVIILEGILLLTDIRLRQEMNFSIFVDTPLDICLMRRMKRDVNERGRSMDSVMAQYQKTVRPMFLQFIDPSKQYADIIVPRGGKNRIAIDILKAKISQFFE.

15-22 (GASASGKS) is an ATP binding site.

Belongs to the uridine kinase family.

Its subcellular location is the cytoplasm. The catalysed reaction is uridine + ATP = UMP + ADP + H(+). The enzyme catalyses cytidine + ATP = CMP + ADP + H(+). Its pathway is pyrimidine metabolism; CTP biosynthesis via salvage pathway; CTP from cytidine: step 1/3. It participates in pyrimidine metabolism; UMP biosynthesis via salvage pathway; UMP from uridine: step 1/1. In Serratia proteamaculans (strain 568), this protein is Uridine kinase.